A 653-amino-acid chain; its full sequence is Translation factor GUF1, mitochondrial (653 aa).

Residues 56–236 enclose the tr-type G domain; it reads ENYRNFSIVA…SIIKNIPAPN (181 aa). GTP is bound by residues 65-72, 129-133, and 183-186; these read AHVDHGKS, DTPGH, and NKID.

It belongs to the TRAFAC class translation factor GTPase superfamily. Classic translation factor GTPase family. LepA subfamily.

The protein localises to the mitochondrion inner membrane. It carries out the reaction GTP + H2O = GDP + phosphate + H(+). In terms of biological role, promotes mitochondrial protein synthesis. May act as a fidelity factor of the translation reaction, by catalyzing a one-codon backward translocation of tRNAs on improperly translocated ribosomes. Binds to mitochondrial ribosomes in a GTP-dependent manner. In Candida tropicalis (strain ATCC MYA-3404 / T1) (Yeast), this protein is Translation factor GUF1, mitochondrial.